The following is a 286-amino-acid chain: MNAYLLAALLGVVEGLTEFLPVSSTAHLRICEALLHIDLGDGFWKMFSIVIQLGAILCLPIYFRARISEFFATFPKGKSGNHTALTHPLTLTIIAFLCTAIPAFLFTKIIGKHLESVIIMGSALLIGGIVMWIVDVMFADKGATDDMDKMSVGQAIWIGLCQVLSAVFPGTSRSMSTIAAGQLSGMTRAAALEFSFFLSIPTMVVATCYDLLKTLRHKDEAGAALGVVHMDAHAWITLAIGFIVSFIVAYFVVAWFMKWVRTRGFVPFAVYRIVVGIAVLAWALKR.

The next 7 helical transmembrane spans lie at 43–63 (FWKM…PIYF), 91–111 (LTII…KIIG), 118–138 (IIMG…DVMF), 150–170 (MSVG…VFPG), 189–209 (AAAL…ATCY), 236–256 (ITLA…VAWF), and 264–284 (GFVP…AWAL).

This sequence belongs to the UppP family.

Its subcellular location is the cell inner membrane. It carries out the reaction di-trans,octa-cis-undecaprenyl diphosphate + H2O = di-trans,octa-cis-undecaprenyl phosphate + phosphate + H(+). Functionally, catalyzes the dephosphorylation of undecaprenyl diphosphate (UPP). Confers resistance to bacitracin. The protein is Undecaprenyl-diphosphatase of Koribacter versatilis (strain Ellin345).